We begin with the raw amino-acid sequence, 334 residues long: Flavonol synthase/flavanone 3-hydroxylase (334 aa).

The 100-residue stretch at 196-295 folds into the Fe2OG dioxygenase domain; sequence DLVYLMKINY…RMSWPVFLEP (100 aa). Residues histidine 220, aspartate 222, and histidine 276 each coordinate Fe cation.

It belongs to the iron/ascorbate-dependent oxidoreductase family. Requires Fe cation as cofactor. L-ascorbate is required as a cofactor.

The protein localises to the cytoplasm. The catalysed reaction is a (2R,3R)-dihydroflavonol + 2-oxoglutarate + O2 = a flavonol + succinate + CO2 + H2O. It carries out the reaction a (2S)-flavan-4-one + 2-oxoglutarate + O2 = a (2R,3R)-dihydroflavonol + succinate + CO2. It functions in the pathway secondary metabolite biosynthesis; flavonoid biosynthesis. Functionally, catalyzes the formation of flavonols from dihydroflavonols. It can act on dihydrokaempferol to produce kaempferol, on dihydroquercetin to produce quercitin and on dihydromyricetin to produce myricetin. The protein is Flavonol synthase/flavanone 3-hydroxylase (FLS) of Eustoma exaltatum subsp. russellianum (Bluebells).